We begin with the raw amino-acid sequence, 490 residues long: Probable cytosol aminopeptidase (490 aa).

Mn(2+) contacts are provided by Lys-256 and Asp-261. The active site involves Lys-268. 3 residues coordinate Mn(2+): Asp-280, Asp-340, and Glu-342. Residue Arg-344 is part of the active site.

This sequence belongs to the peptidase M17 family. Requires Mn(2+) as cofactor.

The protein localises to the cytoplasm. It catalyses the reaction Release of an N-terminal amino acid, Xaa-|-Yaa-, in which Xaa is preferably Leu, but may be other amino acids including Pro although not Arg or Lys, and Yaa may be Pro. Amino acid amides and methyl esters are also readily hydrolyzed, but rates on arylamides are exceedingly low.. The catalysed reaction is Release of an N-terminal amino acid, preferentially leucine, but not glutamic or aspartic acids.. Functionally, presumably involved in the processing and regular turnover of intracellular proteins. Catalyzes the removal of unsubstituted N-terminal amino acids from various peptides. The chain is Probable cytosol aminopeptidase from Synechococcus sp. (strain CC9902).